A 220-amino-acid polypeptide reads, in one-letter code: MELYLDTANVAEVERLARIFPIAGVTTNPSIVAASKESIWDVLPRLQNAIGEEGTLFAQTMSRDAKGMVEEAKRLNNAIPGIVVKIPVTAEGLAAIKLLKKEGIVTLGTAVYSASQGLLAALAGAKYVAPYVNRVDAQGGDGIRMVQELQTLLEHHAPDSMVLAASFKTPRQALDCLLAGCQAITLPLDVAQQMLNTPAVESAIEKFEQDWKNAFGNLNL.

Lys-85 acts as the Schiff-base intermediate with substrate in catalysis.

This sequence belongs to the transaldolase family. Type 3A subfamily. As to quaternary structure, homodecamer.

Its subcellular location is the cytoplasm. The catalysed reaction is beta-D-fructose 6-phosphate = dihydroxyacetone + D-glyceraldehyde 3-phosphate. Functionally, catalyzes the reversible formation of fructose 6-phosphate from dihydroxyacetone and D-glyceraldehyde 3-phosphate via an aldolization reaction. The protein is Fructose-6-phosphate aldolase of Salmonella choleraesuis (strain SC-B67).